The following is a 313-amino-acid chain: Homoserine O-succinyltransferase (313 aa).

The active-site Acyl-thioester intermediate is the Cys142. 2 residues coordinate substrate: Lys163 and Ser192. His235 (proton acceptor) is an active-site residue. Glu237 is a catalytic residue. Position 249 (Arg249) interacts with substrate.

Belongs to the MetA family.

It is found in the cytoplasm. The catalysed reaction is L-homoserine + succinyl-CoA = O-succinyl-L-homoserine + CoA. Its pathway is amino-acid biosynthesis; L-methionine biosynthesis via de novo pathway; O-succinyl-L-homoserine from L-homoserine: step 1/1. Transfers a succinyl group from succinyl-CoA to L-homoserine, forming succinyl-L-homoserine. The sequence is that of Homoserine O-succinyltransferase from Vibrio campbellii (strain ATCC BAA-1116).